A 253-amino-acid polypeptide reads, in one-letter code: DNA repair protein RecO (253 aa).

It belongs to the RecO family.

In terms of biological role, involved in DNA repair and RecF pathway recombination. The polypeptide is DNA repair protein RecO (Dehalococcoides mccartyi (strain ATCC BAA-2266 / KCTC 15142 / 195) (Dehalococcoides ethenogenes (strain 195))).